Reading from the N-terminus, the 541-residue chain is MESQRNILLIGLLFVSFLLWQQWQADKAPKPVATESSVVANATTNHSADVPEADTSVPAALTATQNLITVKTDQLDVQINPVGGDIVFAALVSHKLEQGKDQPFVLLEQTKDFTYIAQSGLIGRDGIDSSAKGRAAFAANKTEFTLADGQDTLEVPLTYVADNGVTYTKVFVFHRGKFNVDIDYKINNTSAAPLQVQMYGQIKQTIKPSESSMMMPTYRGAAFSTQDVRYEKYKFEDMSKSNLNQPTLGGWAAMLQHYFVSAWIPPATDSNTIFSSVSAGGLANIGFRGAVYDIAPGATQEISSQFYVGPKDQKALSALSDTLNLVVDYGFLWWLAVPIHWLLMFYQSFVGNWGVAIILITLTVRGLLFPLTKAQYTSMAKMRNLQPKLQDLKERFGDDRQKMGQAMMELYKKEKVNPMGGCLPILLQMPIFIALYWVLLESFELRHAPFMLWIHDLSVQDPYYILPLLMGASMFVMQKMQPIAPTMDPMQVKMMQWMPMIFTVFFLWFPSGLVLYWLVGNIVAIIQQKIIYAGLEKKGLK.

A run of 5 helical transmembrane segments spans residues 6-26 (NILL…WQAD), 349-369 (FVGN…GLLF), 420-440 (GGCL…WVLL), 457-477 (LSVQ…MFVM), and 500-520 (MIFT…WLVG).

It belongs to the OXA1/ALB3/YidC family. Type 1 subfamily. Interacts with the Sec translocase complex via SecD. Specifically interacts with transmembrane segments of nascent integral membrane proteins during membrane integration.

It is found in the cell inner membrane. Its function is as follows. Required for the insertion and/or proper folding and/or complex formation of integral membrane proteins into the membrane. Involved in integration of membrane proteins that insert both dependently and independently of the Sec translocase complex, as well as at least some lipoproteins. Aids folding of multispanning membrane proteins. This is Membrane protein insertase YidC from Shewanella sp. (strain ANA-3).